The primary structure comprises 314 residues: Porphobilinogen deaminase (314 aa).

Cysteine 234 carries the post-translational modification S-(dipyrrolylmethanemethyl)cysteine.

It belongs to the HMBS family. As to quaternary structure, monomer. Dipyrromethane is required as a cofactor.

The enzyme catalyses 4 porphobilinogen + H2O = hydroxymethylbilane + 4 NH4(+). The protein operates within porphyrin-containing compound metabolism; protoporphyrin-IX biosynthesis; coproporphyrinogen-III from 5-aminolevulinate: step 2/4. Tetrapolymerization of the monopyrrole PBG into the hydroxymethylbilane pre-uroporphyrinogen in several discrete steps. This chain is Porphobilinogen deaminase, found in Mycobacterium marinum (strain ATCC BAA-535 / M).